Here is a 366-residue protein sequence, read N- to C-terminus: Isopentenyl-diphosphate delta-isomerase (366 aa).

6–7 contacts substrate; that stretch reads RK. FMN-binding positions include Thr63, 64–66, Ser94, and Asn123; that span reads GMT. Residue 94–96 coordinates substrate; the sequence is SQR. Residue Gln158 coordinates substrate. Residue Glu159 participates in Mg(2+) binding. FMN-binding positions include Lys191, Ser216, Thr221, 273-275, and 294-295; these read GIR and AN.

Belongs to the IPP isomerase type 2 family. Homooctamer. Dimer of tetramers. Requires FMN as cofactor. It depends on NADPH as a cofactor. The cofactor is Mg(2+).

Its subcellular location is the cytoplasm. It catalyses the reaction isopentenyl diphosphate = dimethylallyl diphosphate. Its function is as follows. Involved in the biosynthesis of isoprenoids. Catalyzes the 1,3-allylic rearrangement of the homoallylic substrate isopentenyl (IPP) to its allylic isomer, dimethylallyl diphosphate (DMAPP). In Metallosphaera sedula (strain ATCC 51363 / DSM 5348 / JCM 9185 / NBRC 15509 / TH2), this protein is Isopentenyl-diphosphate delta-isomerase.